Reading from the N-terminus, the 263-residue chain is Aquaporin-8 (263 aa).

Residues 1 to 38 (MSGEQTPMCSMDLREIKGKETNMADSYHGMSWYEQYIQ) are Cytoplasmic-facing. The chain crosses the membrane as a helical span at residues 39–59 (PCVVELLGSALFIFIGCLSVI). Cys-55 is subject to Cysteine persulfide. A Cysteine sulfenic acid (-SOH) modification is found at Cys-55. The Extracellular portion of the chain corresponds to 60–86 (ENSPNTGLLQPALAHGLALGLIIATLG). Residues 87 to 107 (NISGGHFNPAVSLAVTLVGGL) traverse the membrane as a helical segment. An NPA 1 motif is present at residues 94–96 (NPA). Residues 108-109 (KT) are Cytoplasmic-facing. A helical membrane pass occupies residues 110 to 130 (MLLIPYWVSQLFGGMIGAALA). The Extracellular portion of the chain corresponds to 131-158 (KVVSPEERFWNASGAAFAIVQEQEQVAE). N-linked (GlcNAc...) asparagine glycosylation occurs at Asn-141. A helical transmembrane segment spans residues 159–179 (ALGVEIVMTMLLVLAVCMGAV). The Cytoplasmic segment spans residues 180–185 (NEKTMG). The chain crosses the membrane as a helical span at residues 186-206 (PLAPFSIGFSVIVDILAGGGI). Topologically, residues 207 to 230 (SGACMNPARAFGPAVMAGYWDFHW) are extracellular. The short motif at 212–214 (NPA) is the NPA 2 element. A helical membrane pass occupies residues 231–251 (IYWLGPLLAGLFVGLLIRLFI). Residues 252–263 (GDEKTRLILKSR) are Cytoplasmic-facing.

The protein belongs to the MIP/aquaporin (TC 1.A.8) family. N-glycosylated. Post-translationally, sulfenylation at Cys-55(C55-SOH) when hydrogen peroxide flows through the AQP8 channel, making it susceptible to hydrogen sulfide produced by CBS. In terms of processing, persulfidation at Cys-55 is required to gate AQP8 channel; under stress condition, hydrogen peroxide accumulates in the cell leading to CBS activation that produces hydrogen sulfide inducing persulfidation of oxidized Cys-55 (C55-SOH). As to expression, highly expressed in sperm, pancreas and liver. Expressed in hepatocytes, acinal cells of pancreas and salivary gland, and absorptive colonic epithelial cells. Expressed in the myoepithelium of submandibular and parotid glands. Expressed in pancreatic beta-cells. Expressed in testis but not in epididymis. Expressed in small intestine.

It localises to the cell membrane. The protein resides in the mitochondrion inner membrane. Its subcellular location is the apical cell membrane. The protein localises to the basolateral cell membrane. It is found in the smooth endoplasmic reticulum membrane. The enzyme catalyses H2O(in) = H2O(out). It catalyses the reaction NH4(+)(in) = NH4(+)(out). The catalysed reaction is H2O2(out) = H2O2(in). It carries out the reaction formamide(out) = formamide(in). The enzyme catalyses methylamine(out) = methylamine(in). With respect to regulation, reversibly gated by a two-step sulfenylation-persulfidation process in cells undergoing diverse stresses. Channel that allows the facilitated permeation of water and uncharged molecules, such as hydrogen peroxide and the neutral form of ammonia (NH3), through cellular membranes such as plasma membrane, inner mitochondrial membrane and endoplasmic reticulum membrane of several tissues. The transport of ammonia neutral form induces a parallel transport of proton, at alkaline pH when the concentration of ammonia is high. However, it is unclear whether the transport of proton takes place via the aquaporin or via an endogenous pathway. Also, may transport ammonia analogs such as formamide and methylamine, a transport favourited at basic pH due to the increase of unprotonated (neutral) form, which is expected to favor diffusion. Does not transport urea or glycerol. The water transport mechanism is mercury- and copper-sensitive and passive in response to osmotic driving forces. At the canicular plasma membrane, mediates the osmotic transport of water toward the bile canaliculus and facilitates the cAMP-induced bile canalicular water secretion, a process involved in bile formation. In addition, mediates the hydrogen peroxide release from hepatocyte mitochondria that modulates the SREBF2-mediated cholesterol synthesis and facilitates the mitochondrial ammonia uptake which is metabolized into urea, mainly under glucagon stimulation. In B cells, transports the CYBB-generated hydrogen peroxide from the external leaflet of the plasma membrane to the cytosol to promote B cell activation and differentiation for signal amplification. In the small intestine and colon system, mediates water transport through mitochondria and apical membrane of epithelial cells. May play an important role in the adaptive response of proximal tubule cells to acidosis possibly facilitating mitochondrial ammonia transport. The polypeptide is Aquaporin-8 (Rattus norvegicus (Rat)).